Consider the following 196-residue polypeptide: MNTGNRIGIFGGSFDPVHTGHVLVSVYTLEILDLDRLIVVPVFNPPHKKTVAPFEKRFEWLKKVFEGMEKVEVSDYEKGRGGVSYSIFTIEYFSEIYKTKPFFIVGEDALSYFEKWYRYRDILEKSTLVVYPRYCGKPYHEHARRVLGDLSEIVFLDMPIVQISSTEIRERARIGKTLKGFVPEEIREEVEVFYGA.

This sequence belongs to the NadD family.

The enzyme catalyses nicotinate beta-D-ribonucleotide + ATP + H(+) = deamido-NAD(+) + diphosphate. It functions in the pathway cofactor biosynthesis; NAD(+) biosynthesis; deamido-NAD(+) from nicotinate D-ribonucleotide: step 1/1. Functionally, catalyzes the reversible adenylation of nicotinate mononucleotide (NaMN) to nicotinic acid adenine dinucleotide (NaAD). This Thermotoga sp. (strain RQ2) protein is Probable nicotinate-nucleotide adenylyltransferase.